The following is a 339-amino-acid chain: Phenylalanine--tRNA ligase alpha subunit (339 aa).

Glu-253 is a binding site for Mg(2+).

The protein belongs to the class-II aminoacyl-tRNA synthetase family. Phe-tRNA synthetase alpha subunit type 1 subfamily. As to quaternary structure, tetramer of two alpha and two beta subunits. Mg(2+) is required as a cofactor.

It localises to the cytoplasm. It carries out the reaction tRNA(Phe) + L-phenylalanine + ATP = L-phenylalanyl-tRNA(Phe) + AMP + diphosphate + H(+). The chain is Phenylalanine--tRNA ligase alpha subunit from Thioalkalivibrio sulfidiphilus (strain HL-EbGR7).